The following is a 725-amino-acid chain: Glyoxysomal fatty acid beta-oxidation multifunctional protein MFP-a (725 aa).

It in the N-terminal section; belongs to the enoyl-CoA hydratase/isomerase family. This sequence in the central section; belongs to the 3-hydroxyacyl-CoA dehydrogenase family.

The protein localises to the glyoxysome. It carries out the reaction a (3S)-3-hydroxyacyl-CoA = a (2E)-enoyl-CoA + H2O. The catalysed reaction is a 4-saturated-(3S)-3-hydroxyacyl-CoA = a (3E)-enoyl-CoA + H2O. The enzyme catalyses a (3Z)-enoyl-CoA = a 4-saturated (2E)-enoyl-CoA. It catalyses the reaction a (3E)-enoyl-CoA = a 4-saturated (2E)-enoyl-CoA. It carries out the reaction (3S)-3-hydroxybutanoyl-CoA = (3R)-3-hydroxybutanoyl-CoA. The catalysed reaction is a (3S)-3-hydroxyacyl-CoA + NAD(+) = a 3-oxoacyl-CoA + NADH + H(+). It functions in the pathway lipid metabolism; fatty acid beta-oxidation. This Cucumis sativus (Cucumber) protein is Glyoxysomal fatty acid beta-oxidation multifunctional protein MFP-a.